Consider the following 326-residue polypeptide: MDYSHQTSLVPCGQDKYISKNELLLHLKTYNLYYEGQNLQLRHREEEDEFIVEGLLNISWGLRRPIRLQMQDDNERIRPPPSSSSWHSGCNLGAQGTTLKPLTVPKVQISEVDAPPEGDQMPSSTDSRGLKPLQEDTPQLMRTRSDVGVRRRGNVRTPSDQRRIRRHRFSINGHFYNHKTSVFTPAYGSVTNVRINSTMTTPQVLKLLLNKFKIENSAEEFALYVVHTSGEKQKLKATDYPLIARILQGPCEQISKVFLMEKDQVEEVTYDVAQYIKFEMPVLKSFIQKLQEEEDREVKKLMRKYTVLRLMIRQRLEEIAETPATI.

The interval 111–133 (EVDAPPEGDQMPSSTDSRGLKPL) is disordered. The Ras-associating domain occupies 176–264 (YNHKTSVFTP…SKVFLMEKDQ (89 aa)). The 48-residue stretch at 272–319 (VAQYIKFEMPVLKSFIQKLQEEEDREVKKLMRKYTVLRLMIRQRLEEI) folds into the SARAH domain.

As to quaternary structure, interacts directly with activated KRAS in a GTP-dependent manner. Interacts (via SARAH domain) with STK3/MST2 and STK4/MST1. Post-translationally, phosphorylated by STK3/MST2 and STK4/MST1. In terms of tissue distribution, widely expressed with highest levels in brain, placenta, peripheral blood and lung. Frequently down-regulated in lung tumor cell lines.

The protein resides in the nucleus. It is found in the cytoplasm. Its subcellular location is the chromosome. The protein localises to the centromere. It localises to the kinetochore. Potential tumor suppressor. Acts as a KRAS-specific effector protein. May promote apoptosis and cell cycle arrest. Stabilizes STK3/MST2 by protecting it from proteasomal degradation. The sequence is that of Ras association domain-containing protein 2 (RASSF2) from Homo sapiens (Human).